We begin with the raw amino-acid sequence, 256 residues long: MKFGKSLSNQIEQTLPEWQDKFLSYKELKKRLKLIGSKTADRPVKRLRLDEFSVGISKEEINFIQLLEDELEKFNNFFVEKEEEYIIRLKEFRDRIAKAKDSMEKMIKIRKEIVDFHGEMVLLENYSALNYTGLVKILKKYDKRTGDLMRLPFIQKVLQQPFYTTDLLFKLVKESEAMLDQIFPANETESEIIQAELSEHKFMESLHMKSTIAALRVLKEIRSGSSTVSVFSLPPLQLNGLDETWKKIPLLEQEAK.

The 155-residue stretch at 1–155 (MKFGKSLSNQ…GDLMRLPFIQ (155 aa)) folds into the SPX domain. Positions 30–46 (KRLKLIGSKTADRPVKR) match the Bipartite nuclear localization signal motif.

In terms of assembly, interacts with PHR1 in a highly Pi-dependent manner.

The protein resides in the nucleus. Functionally, plays a positive role in plant adaptation to phosphate starvation. Inhibits PHR1 DNA-binding activity in a Pi-dependent manner. In Arabidopsis thaliana (Mouse-ear cress), this protein is SPX domain-containing protein 1.